The chain runs to 151 residues: Ribosomal RNA large subunit methyltransferase H (151 aa).

S-adenosyl-L-methionine contacts are provided by residues Leu-73, Gly-100, and 119-124 (LTKLTL).

The protein belongs to the RNA methyltransferase RlmH family. As to quaternary structure, homodimer.

The protein resides in the cytoplasm. The enzyme catalyses pseudouridine(1915) in 23S rRNA + S-adenosyl-L-methionine = N(3)-methylpseudouridine(1915) in 23S rRNA + S-adenosyl-L-homocysteine + H(+). In terms of biological role, specifically methylates the pseudouridine at position 1915 (m3Psi1915) in 23S rRNA. The chain is Ribosomal RNA large subunit methyltransferase H from Campylobacter hominis (strain ATCC BAA-381 / DSM 21671 / CCUG 45161 / LMG 19568 / NCTC 13146 / CH001A).